A 284-amino-acid chain; its full sequence is MSNQLSLGWPAPAKLNLFLHVNHRREDGYHELQTLFQFISHGDLLDFKVTDDGSLKLHSNIGNVVADSDNLILRAAKLLQERTATEKGAEIWLDKRLPMGGGIGGGSSDAATCLIALNALWQTHLSRDELAELGLALGADVPVFINGLSAFAEGVGEKLIQVSPKEYWYLVLVPDVHVSTAEIFQDPDLPRNTPKLDLDSLMSSPWRNDCQELVVKRYPQVAKTLDWLIEYAPSRMTGTGACVFGEFEQQQQAQDALAQLPSNMTGFVAKGTNISPLELRLAQL.

The active site involves K14. 98–108 (PMGGGIGGGSS) lines the ATP pocket. D140 is a catalytic residue.

It belongs to the GHMP kinase family. IspE subfamily.

The enzyme catalyses 4-CDP-2-C-methyl-D-erythritol + ATP = 4-CDP-2-C-methyl-D-erythritol 2-phosphate + ADP + H(+). Its pathway is isoprenoid biosynthesis; isopentenyl diphosphate biosynthesis via DXP pathway; isopentenyl diphosphate from 1-deoxy-D-xylulose 5-phosphate: step 3/6. Its function is as follows. Catalyzes the phosphorylation of the position 2 hydroxy group of 4-diphosphocytidyl-2C-methyl-D-erythritol. This chain is 4-diphosphocytidyl-2-C-methyl-D-erythritol kinase, found in Shewanella woodyi (strain ATCC 51908 / MS32).